A 235-amino-acid polypeptide reads, in one-letter code: Adenosine 5'-phosphosulfate reductase (235 aa).

Residues Cys121, Cys122, Cys204, and Cys207 each coordinate [4Fe-4S] cluster. Residue Cys230 is the Nucleophile; cysteine thiosulfonate intermediate of the active site.

The protein belongs to the PAPS reductase family. CysH subfamily. Requires [4Fe-4S] cluster as cofactor.

The protein localises to the cytoplasm. It catalyses the reaction [thioredoxin]-disulfide + sulfite + AMP + 2 H(+) = adenosine 5'-phosphosulfate + [thioredoxin]-dithiol. The protein operates within sulfur metabolism; hydrogen sulfide biosynthesis; sulfite from sulfate. Functionally, catalyzes the formation of sulfite from adenosine 5'-phosphosulfate (APS) using thioredoxin as an electron donor. This Geobacillus sp. (strain WCH70) protein is Adenosine 5'-phosphosulfate reductase.